A 446-amino-acid polypeptide reads, in one-letter code: MSMTPREIVHELNRHIVGQEDAKRAVAIALRNRWRRMQLPAELRAEVTPKNILMIGPTGVGKTEIARRLARLANAPFIKVEATKFTEVGYVGRDVESIIRDLADAAVKMMREQEIQRVRHRAEDAAEDRILDALLPPARQGFGDEPIAREDSNTRQLFRKRLREGQLDDKEIDIEITETPSGVEIMAPPGMEEMTSQLQNLFSSMGKGRKKTHKLKVKDALKLVRDEEAARLVNEEELKARALESVEQNGIVFIDEIDKVAKRANVGGADVSREGVQRDLLPLIEGCTVNTKLGMVKTDHILFIASGAFHLAKPSDLVPELQGRLPIRVELKALTPEDFERILTEPHASLTEQYRELLKTEGLNIQFAADGIKRIAEIAWQVNEKTENIGARRLHTLLERLLEEVSFSAGDLAADHSGQPIVIDAAYVNNHLGELAQDEDLSRYIL.

Residues Val17, 59–64 (GVGKTE), Asp255, Glu320, and Arg392 contribute to the ATP site.

It belongs to the ClpX chaperone family. HslU subfamily. As to quaternary structure, a double ring-shaped homohexamer of HslV is capped on each side by a ring-shaped HslU homohexamer. The assembly of the HslU/HslV complex is dependent on binding of ATP.

It localises to the cytoplasm. In terms of biological role, ATPase subunit of a proteasome-like degradation complex; this subunit has chaperone activity. The binding of ATP and its subsequent hydrolysis by HslU are essential for unfolding of protein substrates subsequently hydrolyzed by HslV. HslU recognizes the N-terminal part of its protein substrates and unfolds these before they are guided to HslV for hydrolysis. This Azotobacter vinelandii (strain DJ / ATCC BAA-1303) protein is ATP-dependent protease ATPase subunit HslU.